The following is a 115-amino-acid chain: MSKMRAERVGEQMKKELMDIINNKVKDPRIGFITITDVQVTNDLSLAKVYLTVLGNEKEVDDTFKALEKAKGFIKSELGSRMRLRIVPELQFEYDHSIEYGNKIEKMIQDLHKKD.

The protein belongs to the RbfA family. In terms of assembly, monomer. Binds 30S ribosomal subunits, but not 50S ribosomal subunits or 70S ribosomes.

The protein resides in the cytoplasm. One of several proteins that assist in the late maturation steps of the functional core of the 30S ribosomal subunit. Associates with free 30S ribosomal subunits (but not with 30S subunits that are part of 70S ribosomes or polysomes). Required for efficient processing of 16S rRNA. May interact with the 5'-terminal helix region of 16S rRNA. The chain is Ribosome-binding factor A from Staphylococcus carnosus (strain TM300).